Consider the following 697-residue polypeptide: Serine/threonine-protein kinase tousled-like 2 (697 aa).

Disordered stretches follow at residues 25–159 (VAKG…SQSE) and 288–316 (KLLI…SKSN). Positions 31-44 (HNESSNQSLCSVGS) are enriched in polar residues. Positions 46–61 (SDKELETPEKKSNDQR) are enriched in basic and acidic residues. Residues 109–145 (SSPQHSLSNPPAAVQQGSPSSISSVNTDHSHTSTSHK) are compositionally biased toward polar residues. 2 coiled-coil regions span residues 265 to 294 (AFQN…IKKK) and 336 to 373 (KLRL…IHNE). Positions 388–666 (YLLLHLLGRG…VHQLASDPYL (279 aa)) constitute a Protein kinase domain. ATP is bound by residues 394–402 (LGRGGFSEV) and Lys417. The active-site Proton acceptor is the Asp518.

This sequence belongs to the protein kinase superfamily. Ser/Thr protein kinase family. As to quaternary structure, monomer. May form homodimers; homodimerization may enhance autophosphoylation and enzymatic activity. Heterodimer with TLK1. Requires Mg(2+) as cofactor. Phosphorylated. Autophosphorylated; phosphorylation promotes the assembly of higher order oligomers and enzymatic activity.

The protein localises to the nucleus. It localises to the nucleoplasm. Its subcellular location is the cytoplasm. The protein resides in the perinuclear region. It is found in the cytoskeleton. The catalysed reaction is L-seryl-[protein] + ATP = O-phospho-L-seryl-[protein] + ADP + H(+). It carries out the reaction L-threonyl-[protein] + ATP = O-phospho-L-threonyl-[protein] + ADP + H(+). Serine/threonine-protein kinase involved in the process of chromatin assembly and probably also DNA replication, transcription, repair, and chromosome segregation. Negative regulator of amino acid starvation-induced autophagy. The chain is Serine/threonine-protein kinase tousled-like 2 from Danio rerio (Zebrafish).